The sequence spans 152 residues: UPF0179 protein HQ_3004A (152 aa).

The protein belongs to the UPF0179 family.

The protein is UPF0179 protein HQ_3004A of Haloquadratum walsbyi (strain DSM 16790 / HBSQ001).